The primary structure comprises 210 residues: MLQSVVFFALLTFASSVSAIYSNNTVSTTTTLAPSYSLVPQETTISYADDTTTFFVTSTVYSTSWFTSTSATITNAASSSLSTSSASGSVTPESTHEITSTSTITSTLLLTLHDSTTLSPSSTAASVSDEDSNNKDAKVKSFEQASTSNGCVPITKFVTVTNEPVTQYVTVTPNTTTQYVTVTGAPSVTTTSPGNVQWYNTTSITNSTSW.

The N-terminal stretch at 1–19 (MLQSVVFFALLTFASSVSA) is a signal peptide. An N-linked (GlcNAc...) asparagine glycan is attached at Asn-23. Disordered stretches follow at residues 80-99 (SLST…HEIT) and 118-142 (LSPS…VKSF). Positions 118 to 127 (LSPSSTAASV) are enriched in low complexity. Over residues 132–141 (SNNKDAKVKS) the composition is skewed to basic and acidic residues. Residues Asn-174, Asn-200, and Asn-206 are each glycosylated (N-linked (GlcNAc...) asparagine).

The protein localises to the secreted. Its subcellular location is the cell wall. It is found in the cell surface. Required to stabilize the cell wall in the absence of multiple GPI-anchored mannoproteins. The polypeptide is Cell wall protein SRL1 (SRL1) (Saccharomyces cerevisiae (strain ATCC 204508 / S288c) (Baker's yeast)).